Here is a 215-residue protein sequence, read N- to C-terminus: Large ribosomal subunit protein uL3 (215 aa).

The segment at Gly-136–Lys-155 is disordered. Gln-151 is subject to N5-methylglutamine.

Belongs to the universal ribosomal protein uL3 family. In terms of assembly, part of the 50S ribosomal subunit. Forms a cluster with proteins L14 and L19. In terms of processing, methylated by PrmB.

In terms of biological role, one of the primary rRNA binding proteins, it binds directly near the 3'-end of the 23S rRNA, where it nucleates assembly of the 50S subunit. The protein is Large ribosomal subunit protein uL3 of Rickettsia felis (strain ATCC VR-1525 / URRWXCal2) (Rickettsia azadi).